The chain runs to 265 residues: Ribosomal RNA small subunit methyltransferase A (265 aa).

Residues His-17, Leu-19, Gly-44, Glu-65, Asp-90, and Asn-112 each contribute to the S-adenosyl-L-methionine site.

It belongs to the class I-like SAM-binding methyltransferase superfamily. rRNA adenine N(6)-methyltransferase family. RsmA subfamily.

The protein resides in the cytoplasm. The enzyme catalyses adenosine(1518)/adenosine(1519) in 16S rRNA + 4 S-adenosyl-L-methionine = N(6)-dimethyladenosine(1518)/N(6)-dimethyladenosine(1519) in 16S rRNA + 4 S-adenosyl-L-homocysteine + 4 H(+). Its function is as follows. Specifically dimethylates two adjacent adenosines (A1518 and A1519) in the loop of a conserved hairpin near the 3'-end of 16S rRNA in the 30S particle. May play a critical role in biogenesis of 30S subunits. The protein is Ribosomal RNA small subunit methyltransferase A of Xylella fastidiosa (strain 9a5c).